Reading from the N-terminus, the 67-residue chain is Large ribosomal subunit protein bL35 (67 aa).

Basic residues predominate over residues 1-16; the sequence is MPKMKTKSSAKKRFRV. The segment at 1-24 is disordered; sequence MPKMKTKSSAKKRFRVRPGGTVKR.

The protein belongs to the bacterial ribosomal protein bL35 family.

The polypeptide is Large ribosomal subunit protein bL35 (Paracidovorax citrulli (strain AAC00-1) (Acidovorax citrulli)).